Here is a 760-residue protein sequence, read N- to C-terminus: Protein HEADING DATE 3B (760 aa).

Composition is skewed to gly residues over residues 1–12 (MATRGGGGGGGG) and 60–70 (SGGGGGGGVGG). 4 disordered regions span residues 1 to 120 (MATR…KINK), 144 to 169 (SRSTAEAPQRRAENTIKSSSGKRLAD), 236 to 262 (VKSRTPLKDKEMEAAQTSKNVEVEKSS), and 285 to 346 (TGII…IEET). The segment covering 71 to 87 (SPAHSTSAASQSQSQSQ) has biased composition (low complexity). Residues 94 to 107 (SLFQPFNVPSNRPG) are compositionally biased toward polar residues. Basic and acidic residues predominate over residues 108–120 (HSTEKINSDKINK). The segment covering 236–248 (VKSRTPLKDKEME) has biased composition (basic and acidic residues). A Nuclear localization signal motif is present at residues 349–355 (KRKRLLE). Disordered stretches follow at residues 485–543 (LQQP…GVQL) and 707–760 (FPTV…QRDD). 3 stretches are compositionally biased toward polar residues: residues 511–522 (QRDQAATNGVSK), 531–543 (ASDNKQNNWGVQL), and 707–730 (FPTVSAQNNQPQPSYSSRDNQTNV).

In terms of tissue distribution, expressed in mesophyll cells of young leaves, anthers, stigmas and the top of lemmas.

It is found in the nucleus. In terms of biological role, involved in the regulation of flowering time under short day (SD) and long day (LD) conditions. Functions as a floral promoter by negatively regulating GHD7, a repressor of the photoperiodic control of flowering. Acts as a floral activator in the LD photoperiodic pathway. Involved in blue light-induced activation of EHD1 expression to promote flowering under SD conditions. This chain is Protein HEADING DATE 3B (HD3B), found in Oryza sativa subsp. japonica (Rice).